The sequence spans 452 residues: Putative zinc metalloprotease VC_2253 (452 aa).

A Zn(2+)-binding site is contributed by His22. The active site involves Glu23. Residue His26 participates in Zn(2+) binding. Residues 98–120 (SAIVSAGPIFNFLFAIFAYWLVF) form a helical membrane-spanning segment. The PDZ domain maps to 197 to 292 (NLRDWNFDPE…QVELTLIPDS (96 aa)). The next 2 membrane-spanning stretches (helical) occupy residues 378-400 (FVYF…LVPL) and 428-447 (MGYR…AIFN).

This sequence belongs to the peptidase M50B family. It depends on Zn(2+) as a cofactor.

The protein localises to the cell inner membrane. The chain is Putative zinc metalloprotease VC_2253 from Vibrio cholerae serotype O1 (strain ATCC 39315 / El Tor Inaba N16961).